Reading from the N-terminus, the 130-residue chain is Small ribosomal subunit protein uS9 (130 aa).

Over residues 99-110 (KKAGFLTRDPRM) the composition is skewed to basic and acidic residues. A disordered region spans residues 99-130 (KKAGFLTRDPRMKERKKYGLKKARRAPQFSKR). A compositionally biased stretch (basic residues) spans 111–130 (KERKKYGLKKARRAPQFSKR).

Belongs to the universal ribosomal protein uS9 family.

This Clostridium botulinum (strain Alaska E43 / Type E3) protein is Small ribosomal subunit protein uS9.